We begin with the raw amino-acid sequence, 159 residues long: Ribosomal RNA large subunit methyltransferase H (159 aa).

S-adenosyl-L-methionine contacts are provided by residues Leu76, Gly108, and 127–132 (FSPMTF).

Belongs to the RNA methyltransferase RlmH family. In terms of assembly, homodimer.

It localises to the cytoplasm. It catalyses the reaction pseudouridine(1915) in 23S rRNA + S-adenosyl-L-methionine = N(3)-methylpseudouridine(1915) in 23S rRNA + S-adenosyl-L-homocysteine + H(+). Functionally, specifically methylates the pseudouridine at position 1915 (m3Psi1915) in 23S rRNA. The sequence is that of Ribosomal RNA large subunit methyltransferase H from Alkaliphilus metalliredigens (strain QYMF).